Consider the following 290-residue polypeptide: tRNA dimethylallyltransferase (290 aa).

Residue 11–18 coordinates ATP; sequence GPTASGKS. 13–18 provides a ligand contact to substrate; sequence TASGKS. Interaction with substrate tRNA regions lie at residues 36-39 and 158-162; these read DSMQ and QRIVR.

Belongs to the IPP transferase family. Monomer. Requires Mg(2+) as cofactor.

The enzyme catalyses adenosine(37) in tRNA + dimethylallyl diphosphate = N(6)-dimethylallyladenosine(37) in tRNA + diphosphate. Functionally, catalyzes the transfer of a dimethylallyl group onto the adenine at position 37 in tRNAs that read codons beginning with uridine, leading to the formation of N6-(dimethylallyl)adenosine (i(6)A). The protein is tRNA dimethylallyltransferase of Bartonella tribocorum (strain CIP 105476 / IBS 506).